Here is a 185-residue protein sequence, read N- to C-terminus: Ribosome-recycling factor (185 aa).

Positions 138–157 (ELKKLEKDHTASEDEVKRAQ) are disordered.

The protein belongs to the RRF family.

The protein resides in the cytoplasm. Responsible for the release of ribosomes from messenger RNA at the termination of protein biosynthesis. May increase the efficiency of translation by recycling ribosomes from one round of translation to another. The sequence is that of Ribosome-recycling factor from Desulfitobacterium hafniense (strain DSM 10664 / DCB-2).